The sequence spans 141 residues: HTH-type transcriptional repressor NsrR (141 aa).

The HTH rrf2-type domain maps to glutamine 2–glutamine 129. The H-T-H motif DNA-binding region spans isoleucine 28–arginine 51. Residues cysteine 91, cysteine 96, and cysteine 102 each contribute to the [2Fe-2S] cluster site.

[2Fe-2S] cluster is required as a cofactor.

Its function is as follows. Nitric oxide-sensitive repressor of genes involved in protecting the cell against nitrosative stress. May require iron for activity. This Yersinia enterocolitica serotype O:8 / biotype 1B (strain NCTC 13174 / 8081) protein is HTH-type transcriptional repressor NsrR.